A 525-amino-acid chain; its full sequence is GMP synthase [glutamine-hydrolyzing] (525 aa).

In terms of domain architecture, Glutamine amidotransferase type-1 spans 9–207 (RILILDFGSQ…VLDICACEAL (199 aa)). Cys-86 acts as the Nucleophile in catalysis. Residues His-181 and Glu-183 contribute to the active site. The GMPS ATP-PPase domain maps to 208-400 (WTPATIIEDA…LGLPYDMLYR (193 aa)). ATP is bound at residue 235–241 (SGGVDSS).

As to quaternary structure, homodimer.

It catalyses the reaction XMP + L-glutamine + ATP + H2O = GMP + L-glutamate + AMP + diphosphate + 2 H(+). Its pathway is purine metabolism; GMP biosynthesis; GMP from XMP (L-Gln route): step 1/1. In terms of biological role, catalyzes the synthesis of GMP from XMP. This Yersinia enterocolitica serotype O:8 / biotype 1B (strain NCTC 13174 / 8081) protein is GMP synthase [glutamine-hydrolyzing].